Here is a 441-residue protein sequence, read N- to C-terminus: tRNA modification GTPase MnmE (441 aa).

Residues R23, E81, and R121 each contribute to the (6S)-5-formyl-5,6,7,8-tetrahydrofolate site. The 148-residue stretch at 219–366 (GFTVVLAGAP…LLDAIQAAAE (148 aa)) folds into the TrmE-type G domain. Residues 229–234 (NSGKST), 248–254 (SDSPGTT), and 273–276 (DTAG) contribute to the GTP site. Mg(2+) is bound by residues S233 and T254. K441 contacts (6S)-5-formyl-5,6,7,8-tetrahydrofolate.

Belongs to the TRAFAC class TrmE-Era-EngA-EngB-Septin-like GTPase superfamily. TrmE GTPase family. As to quaternary structure, homodimer. Heterotetramer of two MnmE and two MnmG subunits. It depends on K(+) as a cofactor.

Its subcellular location is the cytoplasm. Exhibits a very high intrinsic GTPase hydrolysis rate. Involved in the addition of a carboxymethylaminomethyl (cmnm) group at the wobble position (U34) of certain tRNAs, forming tRNA-cmnm(5)s(2)U34. The chain is tRNA modification GTPase MnmE from Methylobacterium radiotolerans (strain ATCC 27329 / DSM 1819 / JCM 2831 / NBRC 15690 / NCIMB 10815 / 0-1).